The primary structure comprises 158 residues: Transcription elongation factor GreA (158 aa).

Residues 48–74 are a coiled coil; sequence EYDAAKNRQGFIEGRIKELNDKIARAE.

Belongs to the GreA/GreB family.

Its function is as follows. Necessary for efficient RNA polymerase transcription elongation past template-encoded arresting sites. The arresting sites in DNA have the property of trapping a certain fraction of elongating RNA polymerases that pass through, resulting in locked ternary complexes. Cleavage of the nascent transcript by cleavage factors such as GreA or GreB allows the resumption of elongation from the new 3'terminus. GreA releases sequences of 2 to 3 nucleotides. The sequence is that of Transcription elongation factor GreA from Syntrophotalea carbinolica (strain DSM 2380 / NBRC 103641 / GraBd1) (Pelobacter carbinolicus).